Reading from the N-terminus, the 101-residue chain is NAD(P)H-quinone oxidoreductase subunit 4L, chloroplastic (101 aa).

The next 3 membrane-spanning stretches (helical) occupy residues 2–22 (IFQS…YGLL), 32–52 (MSLE…SNFV), and 61–81 (VLAL…LAII).

This sequence belongs to the complex I subunit 4L family. As to quaternary structure, NDH is composed of at least 16 different subunits, 5 of which are encoded in the nucleus.

The protein localises to the plastid. It localises to the chloroplast thylakoid membrane. It catalyses the reaction a plastoquinone + NADH + (n+1) H(+)(in) = a plastoquinol + NAD(+) + n H(+)(out). It carries out the reaction a plastoquinone + NADPH + (n+1) H(+)(in) = a plastoquinol + NADP(+) + n H(+)(out). NDH shuttles electrons from NAD(P)H:plastoquinone, via FMN and iron-sulfur (Fe-S) centers, to quinones in the photosynthetic chain and possibly in a chloroplast respiratory chain. The immediate electron acceptor for the enzyme in this species is believed to be plastoquinone. Couples the redox reaction to proton translocation, and thus conserves the redox energy in a proton gradient. This is NAD(P)H-quinone oxidoreductase subunit 4L, chloroplastic from Nephroselmis olivacea (Green alga).